The primary structure comprises 139 residues: MRHYEIVFLVHPDQSEQVPGMIERYTGILTQAGGQVHRLEDWGRRQLAYPIIELHKAHYVLMNVEASAESVEELETAFRFNDAVLRSMVMRTKAAITEASPMAKAKDERDSRRSSEGERRSAPAEATEEVKETAEKAAE.

Positions 97–139 are disordered; sequence TEASPMAKAKDERDSRRSSEGERRSAPAEATEEVKETAEKAAE. A compositionally biased stretch (basic and acidic residues) spans 104–139; that stretch reads KAKDERDSRRSSEGERRSAPAEATEEVKETAEKAAE.

It belongs to the bacterial ribosomal protein bS6 family.

Functionally, binds together with bS18 to 16S ribosomal RNA. This Shewanella sediminis (strain HAW-EB3) protein is Small ribosomal subunit protein bS6.